We begin with the raw amino-acid sequence, 110 residues long: UPF0122 protein BPUM_1495 (110 aa).

This sequence belongs to the UPF0122 family.

In terms of biological role, might take part in the signal recognition particle (SRP) pathway. This is inferred from the conservation of its genetic proximity to ftsY/ffh. May be a regulatory protein. The polypeptide is UPF0122 protein BPUM_1495 (Bacillus pumilus (strain SAFR-032)).